A 156-amino-acid chain; its full sequence is Cyanate hydratase (156 aa).

Residues arginine 96, glutamate 99, and serine 122 contribute to the active site.

The protein belongs to the cyanase family.

It carries out the reaction cyanate + hydrogencarbonate + 3 H(+) = NH4(+) + 2 CO2. Its function is as follows. Catalyzes the reaction of cyanate with bicarbonate to produce ammonia and carbon dioxide. In Burkholderia mallei (strain NCTC 10247), this protein is Cyanate hydratase.